The primary structure comprises 254 residues: Triosephosphate isomerase (254 aa).

12–14 lines the substrate pocket; sequence NWK. His99 functions as the Electrophile in the catalytic mechanism. Glu169 serves as the catalytic Proton acceptor. Substrate is bound by residues Gly175, Ser214, and 235–236; that span reads GG.

It belongs to the triosephosphate isomerase family. Homodimer.

Its subcellular location is the cytoplasm. The catalysed reaction is D-glyceraldehyde 3-phosphate = dihydroxyacetone phosphate. Its pathway is carbohydrate biosynthesis; gluconeogenesis. It participates in carbohydrate degradation; glycolysis; D-glyceraldehyde 3-phosphate from glycerone phosphate: step 1/1. Functionally, involved in the gluconeogenesis. Catalyzes stereospecifically the conversion of dihydroxyacetone phosphate (DHAP) to D-glyceraldehyde-3-phosphate (G3P). This chain is Triosephosphate isomerase, found in Xanthobacter autotrophicus (strain ATCC BAA-1158 / Py2).